A 45-amino-acid polypeptide reads, in one-letter code: Non-specific lipid-transfer protein (45 aa).

The protein belongs to the plant LTP family. In terms of tissue distribution, expressed in pollen.

Its function is as follows. Plant non-specific lipid-transfer proteins transfer phospholipids as well as galactolipids across membranes. May play a role in wax or cutin deposition in the cell walls of expanding epidermal cells and certain secretory tissues. This is Non-specific lipid-transfer protein from Broussonetia papyrifera (Paper mulberry).